We begin with the raw amino-acid sequence, 127 residues long: Small ribosomal subunit protein uS11 (127 aa).

The protein belongs to the universal ribosomal protein uS11 family. In terms of assembly, part of the 30S ribosomal subunit.

Located on the platform of the 30S subunit. This Picrophilus torridus (strain ATCC 700027 / DSM 9790 / JCM 10055 / NBRC 100828 / KAW 2/3) protein is Small ribosomal subunit protein uS11.